A 76-amino-acid polypeptide reads, in one-letter code: DNA-directed RNA polymerase subunit Rpo10 (76 aa).

Residues Cys-16, Cys-19, Cys-53, and Cys-54 each contribute to the Zn(2+) site.

It belongs to the archaeal Rpo10/eukaryotic RPB10 RNA polymerase subunit family. Part of the RNA polymerase complex. Requires Zn(2+) as cofactor.

It is found in the cytoplasm. It catalyses the reaction RNA(n) + a ribonucleoside 5'-triphosphate = RNA(n+1) + diphosphate. Functionally, DNA-dependent RNA polymerase (RNAP) catalyzes the transcription of DNA into RNA using the four ribonucleoside triphosphates as substrates. This chain is DNA-directed RNA polymerase subunit Rpo10, found in Archaeoglobus fulgidus (strain ATCC 49558 / DSM 4304 / JCM 9628 / NBRC 100126 / VC-16).